The sequence spans 51 residues: Zinc metalloproteinase-disintegrin-like crovidisin (51 aa).

The Peptidase M12B domain occupies 1 to 12 (AMVTKNNGDLDK). One can recognise a Disintegrin domain in the interval 13-18 (SGTECR). The N-linked (GlcNAc...) asparagine glycan is linked to asparagine 29.

The protein belongs to the venom metalloproteinase (M12B) family. P-III subfamily. P-IIIa sub-subfamily. Monomer. The cofactor is Zn(2+). As to expression, expressed by the venom gland.

Its subcellular location is the secreted. In terms of biological role, snake venom zinc metalloproteinase-disintegrin-like that blocks the interaction between platelets and collagen fibers through its binding to collagen fibers, resulting in the blockade of collagen-mediated platelet functions such as adhesion, release reaction, thromboxane formation, and aggregation. Binds selectively to collagen type I with high affinity. Also exerts proteolytic activity to matrix. This is Zinc metalloproteinase-disintegrin-like crovidisin from Crotalus viridis viridis (Prairie rattlesnake).